The primary structure comprises 400 residues: Enoyl-[acyl-carrier-protein] reductase [NADH] (400 aa).

Residues 48–53 (GASSGY), 74–75 (FE), 111–112 (DA), and 139–140 (LA) each bind NAD(+). Tyr-225 is a binding site for substrate. Residue Tyr-235 is the Proton donor of the active site. Residues Lys-244 and 273 to 275 (VVT) contribute to the NAD(+) site.

It belongs to the TER reductase family. Monomer.

The catalysed reaction is a 2,3-saturated acyl-[ACP] + NAD(+) = a (2E)-enoyl-[ACP] + NADH + H(+). It participates in lipid metabolism; fatty acid biosynthesis. In terms of biological role, involved in the final reduction of the elongation cycle of fatty acid synthesis (FAS II). Catalyzes the reduction of a carbon-carbon double bond in an enoyl moiety that is covalently linked to an acyl carrier protein (ACP). In Marinomonas sp. (strain MWYL1), this protein is Enoyl-[acyl-carrier-protein] reductase [NADH].